Reading from the N-terminus, the 356-residue chain is Glutamine synthetase cytosolic isozyme 1-1 (356 aa).

Residues Ile19 to Gly99 enclose the GS beta-grasp domain. The GS catalytic domain maps to Lys106–Pro356.

This sequence belongs to the glutamine synthetase family. In terms of assembly, homooctamer. Highly expressed in leaf blades, at intermediate levels in spikelets (rice flower) and at lower levels in roots.

The protein resides in the cytoplasm. The enzyme catalyses L-glutamate + NH4(+) + ATP = L-glutamine + ADP + phosphate + H(+). Functionally, high-affinity glutamine synthetase involved in ammonium assimilation. Seems to be a major component of the cytosolic glutamine synthetic pathway in leaf blades. Plays an important role in maintaining carbon and nitrogen metabolic balance during ammonium assimilation in shoots and roots, thus controlling plant growth and development. Plays an important role in maintaining broad range of metabolites and transcripts involved in the maintenance of plant metabolic homeostasis and development of plastid in roots. In Oryza sativa subsp. japonica (Rice), this protein is Glutamine synthetase cytosolic isozyme 1-1.